The primary structure comprises 332 residues: NADH-quinone oxidoreductase subunit H (332 aa).

Helical transmembrane passes span 4 to 24, 44 to 64, 78 to 98, 120 to 140, 165 to 185, 194 to 214, 255 to 275, 279 to 299, and 312 to 332; these read FAFFALETLIKCIIIIAIFAS, IGPDMVGPFGLIQLVADMIKL, FIFAIAPLISAICAFVSLAAI, VALLFVIGTSGLCFYAVFLGG, VGALALIAIIMLVGSFSLVDI, FSWLIFKQPLAFVLFIIALFI, IAGAILVTLLFLGGFNSFWII, IMMIVKSSFIFFWYFWARAAF, and YLILIPLAVLNLLITALTVLL.

The protein belongs to the complex I subunit 1 family. NDH-1 is composed of 14 different subunits. Subunits NuoA, H, J, K, L, M, N constitute the membrane sector of the complex.

Its subcellular location is the cell inner membrane. The catalysed reaction is a quinone + NADH + 5 H(+)(in) = a quinol + NAD(+) + 4 H(+)(out). NDH-1 shuttles electrons from NADH, via FMN and iron-sulfur (Fe-S) centers, to quinones in the respiratory chain. The immediate electron acceptor for the enzyme in this species is believed to be ubiquinone. Couples the redox reaction to proton translocation (for every two electrons transferred, four hydrogen ions are translocated across the cytoplasmic membrane), and thus conserves the redox energy in a proton gradient. This subunit may bind ubiquinone. The polypeptide is NADH-quinone oxidoreductase subunit H (Campylobacter jejuni subsp. jejuni serotype O:2 (strain ATCC 700819 / NCTC 11168)).